A 297-amino-acid polypeptide reads, in one-letter code: MRPALFDYRHLASGKVREIYRIDDEHLLMVASDRISAFDYVLDSTIPDKGRILTAMSVFFFSFVDAPNHLAGPPDDPRIPEEVLGRALVVRQLDMLPMECVARGYLTGSGLLDYQATGKVCGIPLPPGLVEASRFAAPLFTPAMKAVLGEHDENISFSRMIEMVGVVRANQLRDRTLQIYLQAADHALKTGIIIADTKFEFGIDRDGNLLLADEIFTPDSSRYWSVDDYRVGVVQRSFDKQFVRNWLVSPESGWVRAGALSPPSLPDDIIEATRLCYVEVYERISGMSFDDWIGPGA.

This sequence belongs to the SAICAR synthetase family.

The catalysed reaction is 5-amino-1-(5-phospho-D-ribosyl)imidazole-4-carboxylate + L-aspartate + ATP = (2S)-2-[5-amino-1-(5-phospho-beta-D-ribosyl)imidazole-4-carboxamido]succinate + ADP + phosphate + 2 H(+). It participates in purine metabolism; IMP biosynthesis via de novo pathway; 5-amino-1-(5-phospho-D-ribosyl)imidazole-4-carboxamide from 5-amino-1-(5-phospho-D-ribosyl)imidazole-4-carboxylate: step 1/2. The polypeptide is Phosphoribosylaminoimidazole-succinocarboxamide synthase (purC) (Mycobacterium leprae (strain TN)).